The chain runs to 731 residues: Alpha-xylosidase (731 aa).

Residues Asp353 and Glu356 contribute to the active site. The Proton donor role is filled by Asp428.

This sequence belongs to the glycosyl hydrolase 31 family. In terms of assembly, monomer.

It catalyses the reaction Hydrolysis of terminal, non-reducing alpha-D-xylose residues with release of alpha-D-xylose.. Catalyzes the liberation of alpha-xylose from the non-reducing terminal glucose of xyloglucan oligosaccharides. Has high hydrolytic activity on the disaccharide isoprimeverose. Follows a retaining mechanism of substrate hydrolysis. This is Alpha-xylosidase (xylS) from Saccharolobus solfataricus (strain ATCC 35092 / DSM 1617 / JCM 11322 / P2) (Sulfolobus solfataricus).